Here is a 391-residue protein sequence, read N- to C-terminus: GATA-binding factor 6-A (391 aa).

The tract at residues 57–111 is disordered; sequence GAHSVNSHWSQATSESSSFNNSSPHTSSRYHYPPSPPMHNGSTRDTGYSSSLTVS. Positions 66–83 are enriched in low complexity; it reads SQATSESSSFNNSSPHTS. Residues 96–111 show a composition bias toward polar residues; the sequence is NGSTRDTGYSSSLTVS. 2 GATA-type zinc fingers span residues 182–206 and 236–260; these read CVNC…CNAC and CANC…CNAC. Residues 274–355 are disordered; it reads AMKKEGIQTR…TESTSPNSNT (82 aa). The segment covering 282–291 has biased composition (basic residues); sequence TRKRKPKTLN. Residues 292-319 are compositionally biased toward low complexity; it reads KSKSSSSNGNSSHQISMTPTSTTSSTNS. Residues 326–355 are compositionally biased toward polar residues; the sequence is GSPSQNTTPVVASSLMSTQQTESTSPNSNT.

As to expression, in embryos, expressed in the presumptive heart mesoderm. In adults, expressed at high levels in heart, small intestine, and stomach and at lower levels in lung, pancreas and colon.

It is found in the nucleus. Its function is as follows. Transcriptional activator that binds 5'-GATA-3'-containing motifs within gene promoters. Regulates cardiac-specific transcription during embryogenesis and thereby cardiogenesis. In Xenopus laevis (African clawed frog), this protein is GATA-binding factor 6-A (gata6-a).